The sequence spans 531 residues: Polypyrimidine tract-binding protein 2 (531 aa).

N-acetylmethionine is present on methionine 1. Phosphoserine occurs at positions 26 and 27. RRM domains follow at residues 59–133 (RVLH…YSNH) and 181–257 (LRII…FSKL). The residue at position 308 (serine 308) is a Phosphoserine. 2 RRM domains span residues 338–412 (TVLL…LSKH) and 455–529 (ATLH…FSKS).

Monomer. Interacts with NOVA1; the interaction is direct. Identified in a mRNP complex, at least composed of DHX9, DDX3X, ELAVL1, HNRNPU, IGF2BP1, ILF3, PABPC1, PCBP2, PTBP2, STAU1, STAU2, SYNCRIP and YBX1. Part of a ternary complex containing KHSRP and HNRPH1. Interacts with NOVA2; the interaction is direct. Mainly expressed in brain although also detected in other tissues like heart and skeletal muscle. Isoform 1 and isoform 2 are specifically expressed in neuronal tissues. Isoform 3 and isoform 4 are expressed in non-neuronal tissues. Isoform 5 and isoform 6 are truncated forms expressed in non-neuronal tissues.

The protein resides in the nucleus. In terms of biological role, RNA-binding protein which binds to intronic polypyrimidine tracts and mediates negative regulation of exons splicing. May antagonize in a tissue-specific manner the ability of NOVA1 to activate exon selection. In addition to its function in pre-mRNA splicing, plays also a role in the regulation of translation. Reduced affinity for RNA. In Homo sapiens (Human), this protein is Polypyrimidine tract-binding protein 2.